The sequence spans 210 residues: NADH dehydrogenase [ubiquinone] iron-sulfur protein 8, mitochondrial (210 aa).

The transit peptide at 1 to 34 (MRCLTMPTLLRALAQAAHTGPPGGRTLHSSAVAA) directs the protein to the mitochondrion. 4Fe-4S ferredoxin-type domains follow at residues 102–131 (RRYP…IEAE) and 141–170 (TRYD…EGPN). The [4Fe-4S] cluster site is built by Cys-111, Cys-114, Cys-117, Cys-121, Cys-150, Cys-153, Cys-156, and Cys-160.

Belongs to the complex I 23 kDa subunit family. Core subunit of respiratory chain NADH dehydrogenase (Complex I) which is composed of 45 different subunits. This is a component of the iron-sulfur (IP) fragment of the enzyme. Interacts with RAB5IF. Requires [4Fe-4S] cluster as cofactor.

Its subcellular location is the mitochondrion inner membrane. The catalysed reaction is a ubiquinone + NADH + 5 H(+)(in) = a ubiquinol + NAD(+) + 4 H(+)(out). In terms of biological role, core subunit of the mitochondrial membrane respiratory chain NADH dehydrogenase (Complex I) which catalyzes electron transfer from NADH through the respiratory chain, using ubiquinone as an electron acceptor. Essential for the catalytic activity and assembly of complex I. The polypeptide is NADH dehydrogenase [ubiquinone] iron-sulfur protein 8, mitochondrial (NDUFS8) (Macaca fascicularis (Crab-eating macaque)).